The following is a 450-amino-acid chain: Phosphoglucosamine mutase (450 aa).

S101 (phosphoserine intermediate) is an active-site residue. S101, D240, D242, and D244 together coordinate Mg(2+). S101 is modified (phosphoserine).

It belongs to the phosphohexose mutase family. The cofactor is Mg(2+). Activated by phosphorylation.

It carries out the reaction alpha-D-glucosamine 1-phosphate = D-glucosamine 6-phosphate. Its function is as follows. Catalyzes the conversion of glucosamine-6-phosphate to glucosamine-1-phosphate. In Streptococcus gordonii (strain Challis / ATCC 35105 / BCRC 15272 / CH1 / DL1 / V288), this protein is Phosphoglucosamine mutase.